A 112-amino-acid chain; its full sequence is Transcriptional regulator WhiD (112 aa).

The region spanning 22–86 is the 4Fe-4S Wbl-type domain; that stretch reads ACRGVDSSLF…GGLTEDEREE (65 aa). [4Fe-4S] cluster contacts are provided by cysteine 23, cysteine 53, cysteine 56, and cysteine 62.

It belongs to the WhiB family. The 4Fe-4S form is a monomer; upon oxidation forms a disulfide-bonded homodimer. Requires [4Fe-4S] cluster as cofactor. In terms of processing, can be nitrosylated by NO, 8 NO react per cluster. These complexes are quite stable under anaerobic conditions, but degrade slowly aerobically. Upon Fe-S cluster removal intramolecular disulfide bonds are formed.

The protein localises to the cytoplasm. Its function is as follows. Acts as a transcriptional regulator. Probably redox-responsive. The apo- but not holo-form probably binds DNA. Plays a positive role in prespore maturation and the initiation of sporulation septation. The protein is Transcriptional regulator WhiD (whiD) of Streptomyces coelicolor (strain ATCC BAA-471 / A3(2) / M145).